Here is a 72-residue protein sequence, read N- to C-terminus: Translation initiation factor IF-1 (72 aa).

An S1-like domain is found at 1–72; sequence MAKEDMIEVE…TRGRITYRFK (72 aa).

Belongs to the IF-1 family. Component of the 30S ribosomal translation pre-initiation complex which assembles on the 30S ribosome in the order IF-2 and IF-3, IF-1 and N-formylmethionyl-tRNA(fMet); mRNA recruitment can occur at any time during PIC assembly.

Its subcellular location is the cytoplasm. One of the essential components for the initiation of protein synthesis. Stabilizes the binding of IF-2 and IF-3 on the 30S subunit to which N-formylmethionyl-tRNA(fMet) subsequently binds. Helps modulate mRNA selection, yielding the 30S pre-initiation complex (PIC). Upon addition of the 50S ribosomal subunit IF-1, IF-2 and IF-3 are released leaving the mature 70S translation initiation complex. The polypeptide is Translation initiation factor IF-1 (Enterococcus faecalis (strain ATCC 700802 / V583)).